Consider the following 995-residue polypeptide: Bifunctional glutamine synthetase adenylyltransferase/adenylyl-removing enzyme (995 aa).

The segment at 1-487 (MNVTKPATQR…LHAKLFYQPL (487 aa)) is adenylyl removase. The interval 492 to 995 (APAGLEIAGR…KAVVRKVFGS (504 aa)) is adenylyl transferase.

This sequence belongs to the GlnE family. The cofactor is Mg(2+).

It catalyses the reaction [glutamine synthetase]-O(4)-(5'-adenylyl)-L-tyrosine + phosphate = [glutamine synthetase]-L-tyrosine + ADP. The enzyme catalyses [glutamine synthetase]-L-tyrosine + ATP = [glutamine synthetase]-O(4)-(5'-adenylyl)-L-tyrosine + diphosphate. In terms of biological role, involved in the regulation of glutamine synthetase GlnA, a key enzyme in the process to assimilate ammonia. When cellular nitrogen levels are high, the C-terminal adenylyl transferase (AT) inactivates GlnA by covalent transfer of an adenylyl group from ATP to specific tyrosine residue of GlnA, thus reducing its activity. Conversely, when nitrogen levels are low, the N-terminal adenylyl removase (AR) activates GlnA by removing the adenylyl group by phosphorolysis, increasing its activity. The regulatory region of GlnE binds the signal transduction protein PII (GlnB) which indicates the nitrogen status of the cell. The polypeptide is Bifunctional glutamine synthetase adenylyltransferase/adenylyl-removing enzyme (Mycobacterium marinum (strain ATCC BAA-535 / M)).